Reading from the N-terminus, the 496-residue chain is Apulose kinase (496 aa).

ATP-binding positions include Thr-13 to Asn-15, Thr-267, Gly-308, and Gly-408 to Asn-412.

The protein belongs to the FGGY kinase family.

The catalysed reaction is apulose + ATP = apulose 4-phosphate + ADP + H(+). It participates in carbohydrate metabolism. Functionally, involved in catabolism of D-apiose. Catalyzes phosphorylation of apulose to form apulose 4-phosphate. This chain is Apulose kinase, found in Pectobacterium atrosepticum (strain SCRI 1043 / ATCC BAA-672) (Erwinia carotovora subsp. atroseptica).